A 365-amino-acid chain; its full sequence is Sulfate/thiosulfate import ATP-binding protein CysA (365 aa).

The region spanning 3 to 237 (IEIANIKKSF…PATRFVLEFM (235 aa)) is the ABC transporter domain. 35 to 42 (GPSGSGKT) contributes to the ATP binding site.

The protein belongs to the ABC transporter superfamily. Sulfate/tungstate importer (TC 3.A.1.6) family. The complex is composed of two ATP-binding proteins (CysA), two transmembrane proteins (CysT and CysW) and a solute-binding protein (CysP).

It localises to the cell inner membrane. It catalyses the reaction sulfate(out) + ATP + H2O = sulfate(in) + ADP + phosphate + H(+). The enzyme catalyses thiosulfate(out) + ATP + H2O = thiosulfate(in) + ADP + phosphate + H(+). Its function is as follows. Part of the ABC transporter complex CysAWTP involved in sulfate/thiosulfate import. Responsible for energy coupling to the transport system. The sequence is that of Sulfate/thiosulfate import ATP-binding protein CysA from Shigella flexneri.